Reading from the N-terminus, the 580-residue chain is MPIVAQSTETTDWVSRFADEVIAESERRAPGKPGVVVASGLSPSGPIHLGNLREVMTPHLVADEVRRRGHEVRHLISWDDYDRYRKVPAGVPGVDESWAEHIGKPLTSVPAPKGSPHPNWAEHFKAAMVDSLAEMGVEFDGISQTAQYTSGVYREQILHAMKHRRDIDAILDQYRTKKAPAKKSQKPLDEAELEAAEGSGAAAEDDGSSGSAGYFPYKPYCGNCEKDLTTVTAYDDDSTELTYACTACGFSETVRLSEFNRGKLVWKVDWPMRWAYEGVVFEPSGVDHSSPGSSFQVGGQIVGIFGGEQPIGPMYAFVGISGMAKMSSSKGGVPTPADALKIMEPQLLRWLYARRRPNQSFKIAFDQEIQRLYDEWDRLDAKVADGSALPADAAAHARAVGTAAGELPRTPRPLPYRTLASVADITAGHEDQALRILGELDPANPIASLDEARPRYDKAEAWINTHVPADQRTIVRQEPDAELLKSLDEPSRQSLRLLLDGLADHWSLDGLTHHVYGVPKVQAGFPADATPKELPPEIKTAQRTFFALLYHLLVGRDTGPRLPTLLLAVGQDRVRTLLGE.

Positions 43 to 51 (PSGPIHLGN) match the 'HIGH' region motif. A disordered region spans residues 178-209 (KAPAKKSQKPLDEAELEAAEGSGAAAEDDGSS). Residues 196-209 (AEGSGAAAEDDGSS) show a composition bias toward low complexity. The 'KMSKS' region signature appears at 325-329 (KMSSS).

Belongs to the class-I aminoacyl-tRNA synthetase family.

The protein localises to the cytoplasm. The catalysed reaction is tRNA(Lys) + L-lysine + ATP = L-lysyl-tRNA(Lys) + AMP + diphosphate. In Streptomyces coelicolor (strain ATCC BAA-471 / A3(2) / M145), this protein is Lysine--tRNA ligase (lysS).